An 85-amino-acid chain; its full sequence is Splicing factor 3B subunit 5 (85 aa).

Belongs to the SF3B5 family. In terms of assembly, component of the SF3B complex. SF3B complex associates with the splicing factor SF3A complex and a 12S RNA unit to form the U2 small nuclear ribonucleoproteins complex (U2 snRNP). Identified in the SAGA transcription regulatory histone acetylation (HAT) complex; the interaction is RNA-independent.

It localises to the nucleus. Its function is as follows. Involved in pre-mRNA splicing as component of spliceosome. As part of the spliceosome complex, plays a role in the regulation of spermatogonial differentiation. When associated with the SAGA transcription regulatory histone acetylation (HAT) complex, might be involved in the transcriptional activation of a subset of SAGA-regulated genes. The sequence is that of Splicing factor 3B subunit 5 from Drosophila melanogaster (Fruit fly).